The sequence spans 210 residues: Cilia- and flagella-associated protein 418 (210 aa).

The required for interaction with FAM161A stretch occupies residues Met-1 to Asn-77. The tract at residues Leu-24–Phe-59 is disordered. The segment covering Ser-41 to Phe-59 has biased composition (basic and acidic residues).

Interacts (via N-terminus) with FAM161A (via central region); the interaction is direct.

It is found in the cytoplasm. Its subcellular location is the photoreceptor inner segment. Its function is as follows. May be involved in photoreceptor outer segment disk morphogenesis. In Rattus norvegicus (Rat), this protein is Cilia- and flagella-associated protein 418.